The following is a 628-amino-acid chain: MGYEAGQYDVIVIGAGHAGVEAALASARQGAKTLVLTINLDMVAFMPCNPSVGGPAKGIVVREIDALGGEMARNIDKTHIQMRMLNTGKGPAVRALRAQADKFQYQHEMKHTLEKTPNLTLLQGIAERLIIEDGECRGVITQTGAEYKAKTVVLTTGTYLRGRIILGDLSYSSGPNNQQPSIKLSEHLEELGFDLVRFKTGTPPRVSSDSIDYSKTEIQPGDPVPRAFSYETVEYITDQLPCWLTYTSPETHEIIDSNLHRSPMYSGMIKGTGPRYCPSIEDKVVRFNDKPRHQIFLEPEGRNTQEVYVQGLSTSLPEDVQQRMLATIPGLEKVQMMRAGYAIEYDAIVPTQLWPTLETKKIPNLYTAGQINGTSGYEEAAGQGIMAGINAGRKALGKEEVILSRSDAYIGVLIDDLVTKGTNEPYRLLTSRAEYRLLLRHDNADLRLTEIGHDIGLISDERYEAFEKKKAAIEAEKKRLWSVIIKPSPENQEYIRSLGGSELKDGVRGTDLMKRPEMNYETVTKLAPADSPVPQDVAEQVEIQVKYEGYIEKSLQQVEKLKKMENKKIPDRIDYDAIKGIATEARQKLKEVRPLSVAQASRISGVNPADISILLVYLEQGRIAKVAE.

14–19 lines the FAD pocket; the sequence is GAGHAG. NAD(+) is bound at residue 273–287; sequence GPRYCPSIEDKVVRF.

The protein belongs to the MnmG family. As to quaternary structure, homodimer. Heterotetramer of two MnmE and two MnmG subunits. The cofactor is FAD.

The protein localises to the cytoplasm. Its function is as follows. NAD-binding protein involved in the addition of a carboxymethylaminomethyl (cmnm) group at the wobble position (U34) of certain tRNAs, forming tRNA-cmnm(5)s(2)U34. The protein is tRNA uridine 5-carboxymethylaminomethyl modification enzyme MnmG of Bacillus velezensis (strain DSM 23117 / BGSC 10A6 / LMG 26770 / FZB42) (Bacillus amyloliquefaciens subsp. plantarum).